The sequence spans 165 residues: Anaerobic nitrite reductase GLB1 (165 aa).

Positions 12 to 162 (VFGEEQEALV…LVAAIKREMK (151 aa)) constitute a Globin domain. The short motif at 45 to 49 (EIAPS) is the Homodimerization element. The heme b site is built by Ser55, Lys69, His73, Arg103, Thr107, and His108. A Homodimerization motif is present at residues 115–127 (DGHFEVTGFALLE).

It belongs to the plant globin family. In terms of assembly, homodimer. Heme b is required as a cofactor. In embryonic organs and at low levels in vegetative organs.

It is found in the cytoplasm. It localises to the nucleus. It carries out the reaction Fe(III)-heme b-[protein] + nitric oxide + H2O = Fe(II)-heme b-[protein] + nitrite + 2 H(+). Functionally, phytoglobin that reduces nitrite to nitric oxide (NO) under anoxic conditions (e.g. during flooding or in waterlogged soil). May not function as an oxygen storage or transport protein. Has an unusually high affinity for O(2) through an hexacoordinate heme iron because of a very low dissociation constant. This Zea mays (Maize) protein is Anaerobic nitrite reductase GLB1 (HB).